The sequence spans 424 residues: Deoxyguanosinetriphosphate triphosphohydrolase-like protein (424 aa).

Residues 1–10 show a composition bias toward pro residues; the sequence is MEGTAPPTPY. The segment at 1-31 is disordered; sequence MEGTAPPTPYDPASVARYAPEPDKRPGRTAF. A compositionally biased stretch (basic and acidic residues) spans 20–31; sequence PEPDKRPGRTAF. Residues 70–220 enclose the HD domain; sequence RLTHSLECAQ…MDWADDVAYS (151 aa).

The protein belongs to the dGTPase family. Type 2 subfamily.

In Streptomyces coelicolor (strain ATCC BAA-471 / A3(2) / M145), this protein is Deoxyguanosinetriphosphate triphosphohydrolase-like protein.